The following is a 905-amino-acid chain: Protein LONGIFOLIA 2 (905 aa).

Disordered regions lie at residues 42–136 (VSGG…GGLM), 232–268 (RLSL…RSSS), 285–315 (DTEQ…SRSV), 432–585 (STSP…SDSN), 606–626 (CDFP…IKQD), and 690–711 (VPFP…ECSP). Basic and acidic residues predominate over residues 65–74 (ESDKETERSS). The span at 90–117 (FESSSRPSFSSSPRSSSFSSAEVSTTAS) shows a compositional bias: low complexity. Positions 286 to 296 (TEQRRENRFCD) are enriched in basic and acidic residues. 3 stretches are compositionally biased toward polar residues: residues 432–461 (STSP…SGKQ), 477–487 (LDSTKSNSPKT), and 501–516 (MTKS…SPRT). The span at 566-581 (PDDRLSDARSDLRSLR) shows a compositional bias: basic and acidic residues.

Interacts (via C-terminus) with TON1A and TON1B.

It localises to the cytoplasm. The protein resides in the cytoskeleton. In association with LNG1, regulates leaf morphology by promoting longitudinal polar cell elongation independently of ROT3. Associates with microtubules and recruits TON1A and TON1B to the cytoskeleton through its C-terminus. In Arabidopsis thaliana (Mouse-ear cress), this protein is Protein LONGIFOLIA 2 (LNG2).